Consider the following 694-residue polypeptide: Elongation factor G 1 (694 aa).

A tr-type G domain is found at 5–280; it reads SRYRNIGIFA…AVVDYLPDPT (276 aa). GTP contacts are provided by residues 14–21, 78–82, and 132–135; these read AHVDAGKT, DTPGH, and NKLD.

Belongs to the TRAFAC class translation factor GTPase superfamily. Classic translation factor GTPase family. EF-G/EF-2 subfamily.

The protein resides in the cytoplasm. In terms of biological role, catalyzes the GTP-dependent ribosomal translocation step during translation elongation. During this step, the ribosome changes from the pre-translocational (PRE) to the post-translocational (POST) state as the newly formed A-site-bound peptidyl-tRNA and P-site-bound deacylated tRNA move to the P and E sites, respectively. Catalyzes the coordinated movement of the two tRNA molecules, the mRNA and conformational changes in the ribosome. This chain is Elongation factor G 1, found in Methylococcus capsulatus (strain ATCC 33009 / NCIMB 11132 / Bath).